The following is a 317-amino-acid chain: L-lactate dehydrogenase (317 aa).

Residues Val-17, Asp-38, Lys-43, Tyr-69, and 83–84 contribute to the NAD(+) site; that span reads GA. The substrate site is built by Gln-86 and Arg-92. NAD(+) is bound by residues Ser-105, 122-124, and Ser-147; that span reads ATN. 124–127 is a substrate binding site; that stretch reads NPVD. 152–155 serves as a coordination point for substrate; that stretch reads DTAR. Beta-D-fructose 1,6-bisphosphate-binding residues include Arg-157 and His-172. His-179 serves as the catalytic Proton acceptor. At Tyr-224 the chain carries Phosphotyrosine. Thr-233 contacts substrate.

Belongs to the LDH/MDH superfamily. LDH family. As to quaternary structure, homotetramer.

The protein localises to the cytoplasm. The enzyme catalyses (S)-lactate + NAD(+) = pyruvate + NADH + H(+). Its pathway is fermentation; pyruvate fermentation to lactate; (S)-lactate from pyruvate: step 1/1. Allosterically activated by fructose 1,6-bisphosphate (FBP). Its function is as follows. Catalyzes the conversion of lactate to pyruvate. This is L-lactate dehydrogenase from Geobacillus kaustophilus (strain HTA426).